A 333-amino-acid polypeptide reads, in one-letter code: Cytochrome f (333 aa).

A signal peptide spans 1 to 16; that stretch reads MRNVFRTARLTRSARA. A helical transmembrane segment spans residues 17-36; the sequence is IVKTLLIAIATVTFYFTSDL. Residues Tyr-45, Cys-66, Cys-69, and His-70 each contribute to the heme site. Residues 299–319 form a helical membrane-spanning segment; that stretch reads VKWMIAFVALVMLAQVMLVLK.

This sequence belongs to the cytochrome f family. The 4 large subunits of the cytochrome b6-f complex are cytochrome b6, subunit IV (17 kDa polypeptide, PetD), cytochrome f and the Rieske protein, while the 4 small subunits are PetG, PetL, PetM and PetN. The complex functions as a dimer. Requires heme as cofactor.

It is found in the cellular thylakoid membrane. Component of the cytochrome b6-f complex, which mediates electron transfer between photosystem II (PSII) and photosystem I (PSI), cyclic electron flow around PSI, and state transitions. This Nostoc punctiforme (strain ATCC 29133 / PCC 73102) protein is Cytochrome f.